Reading from the N-terminus, the 288-residue chain is Aminoglycoside 6-adenylyltransferase (288 aa).

It carries out the reaction streptomycin + ATP = 6-O-adenylylstreptomycin + diphosphate. Mediates bacterial resistance to streptomycin, is probably a streptomycin 6-adenylyltransferase. This chain is Aminoglycoside 6-adenylyltransferase, found in Campylobacter jejuni.